A 943-amino-acid chain; its full sequence is Zinc finger BED domain-containing protein 39 (943 aa).

Positions 1–99 are disordered; sequence MSSVSSDIDG…DIAMDVSGST (99 aa). The segment covering 12–21 has biased composition (basic and acidic residues); it reads PETKRFRIDV. The span at 50-72 shows a compositional bias: low complexity; it reads SPAAPSSASYRSSNSSVISSSES. A compositionally biased stretch (basic and acidic residues) spans 73–85; the sequence is PIKDEDVDVHDGQ. The BED-type; degenerate zinc-finger motif lies at 184 to 235; it reads NKQTPVWKYFVYNKTENLSRCIVGDCTYMLKGPHTSTLACHLKKHTREYSEF. Disordered regions lie at residues 242–315 and 328–348; these read YSRT…KEPS and RQAT…PQLP. Residues 262–276 show a composition bias toward polar residues; the sequence is TLQTQNTPRQTGSPA. Residues 277–292 show a composition bias toward low complexity; sequence STCNTNSNTSSSVSSG. The span at 328–338 shows a compositional bias: polar residues; it reads RQATNNSNGSP.

Expressed in distal tip cells and in germline cells.

It localises to the nucleus. The protein resides in the cytoplasm. Functionally, regulates the timing and orientation of distal tip cell migration during gonadal development. May act in parallel to cacn-1 and Rac GTPases to control the anterior and posterior migration of distal tip cells. The chain is Zinc finger BED domain-containing protein 39 from Caenorhabditis elegans.